Consider the following 574-residue polypeptide: MELENFVANNLLLKARLGFNKQTGRSKKWRELLKFPPVSMCTELRWSIEKDFSSLCDKQPIGRLLFRQFCDTKPDLKRCIEFLDAVAEYEVTIEEEQREFGLAIFSRFFKEKSEVPLPEIPPDIVKECKWNLKQNSPSQNVFEECAGIVCKYLSETPFEEYQESTYFNRFLQWKWLERRPVTKNTFRQYRVLGKGGFGEVCACQVRATGKMYACKKLEKKRIKKRKGEAMALNEKRILEKLHSRFVVSLAYTYETKDALCLVLTIMNGGDLKYHIYNLGDPGFEEPRAVFYAAELCCGLEDLQRKRIVYRDLKPENILLDDHGHIRISDLGLAMEVPEGEMVRGRVGTVGYMAPEIINHEKYTFSPDWWGLGCLIYEMIAGHSPFRKYKEKVNREELERRVKNETEEYSERFSEDAKSICSMLLIKDPSKRLGCQRDGVSAVKQHPIFKDINFSRLEANMLDPPFIPDPQAIYCRNILDIGQFSVVKGVNLDTNDEIFYAEFATGSVTIPWQNEMIESGCFKDLNENEDDLSSLEKYKMCSSILRPKRNFFRRLFRRTGCLNIALSEEREPTEH.

Met-1 is subject to N-acetylmethionine. The segment at 1-153 is N-terminal; that stretch reads MELENFVANN…ECAGIVCKYL (153 aa). Residues 51–171 enclose the RGS domain; sequence DFSSLCDKQP…QESTYFNRFL (121 aa). Positions 186 to 448 constitute a Protein kinase domain; the sequence is FRQYRVLGKG…VSAVKQHPIF (263 aa). Residues 192–200 and Lys-215 each bind ATP; that span reads LGKGGFGEV. Asp-311 (proton acceptor) is an active-site residue. Residues 449 to 514 form the AGC-kinase C-terminal domain; it reads KDINFSRLEA…GSVTIPWQNE (66 aa). Phosphoserine is present on Ser-484.

This sequence belongs to the protein kinase superfamily. AGC Ser/Thr protein kinase family. GPRK subfamily. In terms of assembly, interacts with DRD3. Palmitoylated.

Its subcellular location is the cytoplasm. It is found in the cell cortex. The enzyme catalyses [G-protein-coupled receptor] + ATP = [G-protein-coupled receptor]-phosphate + ADP + H(+). Inhibited by heparin. Its function is as follows. Specifically phosphorylates the activated forms of G protein-coupled receptors. The chain is G protein-coupled receptor kinase 4 (Grk4) from Mus musculus (Mouse).